The following is a 123-amino-acid chain: Small ribosomal subunit protein uS12 (123 aa).

Residue D89 is modified to 3-methylthioaspartic acid. The disordered stretch occupies residues 104–123 (SVGVKDRKKSRSKYGAKRPK). A compositionally biased stretch (basic residues) spans 109–123 (DRKKSRSKYGAKRPK).

The protein belongs to the universal ribosomal protein uS12 family. As to quaternary structure, part of the 30S ribosomal subunit. Contacts proteins S8 and S17. May interact with IF1 in the 30S initiation complex.

With S4 and S5 plays an important role in translational accuracy. In terms of biological role, interacts with and stabilizes bases of the 16S rRNA that are involved in tRNA selection in the A site and with the mRNA backbone. Located at the interface of the 30S and 50S subunits, it traverses the body of the 30S subunit contacting proteins on the other side and probably holding the rRNA structure together. The combined cluster of proteins S8, S12 and S17 appears to hold together the shoulder and platform of the 30S subunit. The sequence is that of Small ribosomal subunit protein uS12 from Pelobacter propionicus (strain DSM 2379 / NBRC 103807 / OttBd1).